The following is a 122-amino-acid chain: Large ribosomal subunit protein uL14 (122 aa).

It belongs to the universal ribosomal protein uL14 family. In terms of assembly, part of the 50S ribosomal subunit. Forms a cluster with proteins L3 and L19. In the 70S ribosome, L14 and L19 interact and together make contacts with the 16S rRNA in bridges B5 and B8.

Functionally, binds to 23S rRNA. Forms part of two intersubunit bridges in the 70S ribosome. The chain is Large ribosomal subunit protein uL14 from Desulfosudis oleivorans (strain DSM 6200 / JCM 39069 / Hxd3) (Desulfococcus oleovorans).